Reading from the N-terminus, the 324-residue chain is tRNA N6-adenosine threonylcarbamoyltransferase (324 aa).

Residues His107, His111, and Tyr128 each contribute to the Fe cation site. Residues 128 to 132 (YVSGG), Asp160, Gly173, Glu177, and Asn256 contribute to the substrate site. Asp284 contributes to the Fe cation binding site.

Belongs to the KAE1 / TsaD family. In terms of assembly, monomer. Component of the KEOPS complex that consists of Kae1, Bud32, Cgi121 and Pcc1; the whole complex dimerizes. Fe(2+) is required as a cofactor.

It is found in the cytoplasm. The catalysed reaction is L-threonylcarbamoyladenylate + adenosine(37) in tRNA = N(6)-L-threonylcarbamoyladenosine(37) in tRNA + AMP + H(+). Required for the formation of a threonylcarbamoyl group on adenosine at position 37 (t(6)A37) in tRNAs that read codons beginning with adenine. Is a component of the KEOPS complex that is probably involved in the transfer of the threonylcarbamoyl moiety of threonylcarbamoyl-AMP (TC-AMP) to the N6 group of A37. Kae1 likely plays a direct catalytic role in this reaction, but requires other protein(s) of the complex to fulfill this activity. The chain is tRNA N6-adenosine threonylcarbamoyltransferase from Methanothrix thermoacetophila (strain DSM 6194 / JCM 14653 / NBRC 101360 / PT) (Methanosaeta thermophila).